A 303-amino-acid polypeptide reads, in one-letter code: N-acetylmuramic acid 6-phosphate etherase (303 aa).

In terms of domain architecture, SIS spans 62 to 225 (IVAAFRQGGR…TTASMVLLGK (164 aa)). The active-site Proton donor is the glutamate 90. Residue glutamate 121 is part of the active site.

Belongs to the GCKR-like family. MurNAc-6-P etherase subfamily. As to quaternary structure, homodimer.

It catalyses the reaction N-acetyl-D-muramate 6-phosphate + H2O = N-acetyl-D-glucosamine 6-phosphate + (R)-lactate. The protein operates within amino-sugar metabolism; 1,6-anhydro-N-acetylmuramate degradation. It participates in amino-sugar metabolism; N-acetylmuramate degradation. Its pathway is cell wall biogenesis; peptidoglycan recycling. In terms of biological role, specifically catalyzes the cleavage of the D-lactyl ether substituent of MurNAc 6-phosphate, producing GlcNAc 6-phosphate and D-lactate. Together with AnmK, is also required for the utilization of anhydro-N-acetylmuramic acid (anhMurNAc) either imported from the medium or derived from its own cell wall murein, and thus plays a role in cell wall recycling. The protein is N-acetylmuramic acid 6-phosphate etherase of Histophilus somni (strain 129Pt) (Haemophilus somnus).